Here is a 361-residue protein sequence, read N- to C-terminus: tRNA-specific 2-thiouridylase MnmA (361 aa).

ATP is bound by residues 8-15 and methionine 35; that span reads AMSGGVDS. The segment at 95-97 is interaction with target base in tRNA; that stretch reads NPD. Cysteine 100 (nucleophile) is an active-site residue. Cysteines 100 and 196 form a disulfide. Residue glycine 124 participates in ATP binding. The tract at residues 146-148 is interaction with tRNA; that stretch reads KDQ. The active-site Cysteine persulfide intermediate is the cysteine 196. An interaction with tRNA region spans residues 303–304; sequence RY.

This sequence belongs to the MnmA/TRMU family.

It localises to the cytoplasm. The catalysed reaction is S-sulfanyl-L-cysteinyl-[protein] + uridine(34) in tRNA + AH2 + ATP = 2-thiouridine(34) in tRNA + L-cysteinyl-[protein] + A + AMP + diphosphate + H(+). In terms of biological role, catalyzes the 2-thiolation of uridine at the wobble position (U34) of tRNA, leading to the formation of s(2)U34. The chain is tRNA-specific 2-thiouridylase MnmA from Chlamydia pneumoniae (Chlamydophila pneumoniae).